Consider the following 266-residue polypeptide: Thymidylate synthase (266 aa).

Arg-24 is a dUMP binding site. His-54 lines the (6R)-5,10-methylene-5,6,7,8-tetrahydrofolate pocket. 129 to 130 is a dUMP binding site; it reads RR. The active-site Nucleophile is the Cys-149. Residues 169–172, Asn-180, and 210–212 each bind dUMP; these read RSAD and HIY. Position 172 (Asp-172) interacts with (6R)-5,10-methylene-5,6,7,8-tetrahydrofolate. Ala-265 contributes to the (6R)-5,10-methylene-5,6,7,8-tetrahydrofolate binding site.

The protein belongs to the thymidylate synthase family. Bacterial-type ThyA subfamily. In terms of assembly, homodimer.

The protein localises to the cytoplasm. It catalyses the reaction dUMP + (6R)-5,10-methylene-5,6,7,8-tetrahydrofolate = 7,8-dihydrofolate + dTMP. The protein operates within pyrimidine metabolism; dTTP biosynthesis. Catalyzes the reductive methylation of 2'-deoxyuridine-5'-monophosphate (dUMP) to 2'-deoxythymidine-5'-monophosphate (dTMP) while utilizing 5,10-methylenetetrahydrofolate (mTHF) as the methyl donor and reductant in the reaction, yielding dihydrofolate (DHF) as a by-product. This enzymatic reaction provides an intracellular de novo source of dTMP, an essential precursor for DNA biosynthesis. The polypeptide is Thymidylate synthase (Mycobacterium ulcerans (strain Agy99)).